Consider the following 359-residue polypeptide: Peptide methionine sulfoxide reductase MsrA/MsrB (359 aa).

A peptide methionine sulfoxide reductase A region spans residues 36–189 (RVIYLAGGCF…PSGYCHIDLK (154 aa)). Residue C44 is part of the active site. The 124-residue stretch at 206–329 (DEVLKKKLTK…NSAALRFIPL (124 aa)) folds into the MsrB domain. The active-site Nucleophile is C318.

The protein in the N-terminal section; belongs to the MsrA Met sulfoxide reductase family. This sequence in the C-terminal section; belongs to the MsrB Met sulfoxide reductase family.

It catalyses the reaction L-methionyl-[protein] + [thioredoxin]-disulfide + H2O = L-methionyl-(S)-S-oxide-[protein] + [thioredoxin]-dithiol. It carries out the reaction [thioredoxin]-disulfide + L-methionine + H2O = L-methionine (S)-S-oxide + [thioredoxin]-dithiol. The enzyme catalyses L-methionyl-[protein] + [thioredoxin]-disulfide + H2O = L-methionyl-(R)-S-oxide-[protein] + [thioredoxin]-dithiol. In terms of biological role, has an important function as a repair enzyme for proteins that have been inactivated by oxidation. Catalyzes the reversible oxidation-reduction of methionine sulfoxide in proteins to methionine. The polypeptide is Peptide methionine sulfoxide reductase MsrA/MsrB (msrAB) (Helicobacter pylori (strain ATCC 700392 / 26695) (Campylobacter pylori)).